The primary structure comprises 215 residues: T-complex protein 10A homolog 1 (215 aa).

Positions methionine 1–glycine 25 are disordered. Over residues glutamate 7–aspartate 19 the composition is skewed to basic and acidic residues. Residues alanine 69–serine 110 are a coiled coil. The tract at residues leucine 75–leucine 96 is leucine-zipper. Residues alanine 150–alanine 163 are compositionally biased toward polar residues. A disordered region spans residues alanine 150–valine 215.

This sequence belongs to the TCP10 family. As to quaternary structure, self-associates (via leucine zipper). Interacts (via leucine zipper) with ZIPK/DAPK3 (via leucine zipper). Interacts with MAD4. Expressed in liver and testis. Expressed in the seminiferous tubules (at protein level).

Its subcellular location is the nucleus. Its function is as follows. May be involved in transcriptional regulation. Has in vitro transcription inhibition activity. Acts as a tumor suppressor in hepatocellular carcinoma (HCC) cells. The sequence is that of T-complex protein 10A homolog 1 (TCP10L) from Homo sapiens (Human).